Here is a 232-residue protein sequence, read N- to C-terminus: Probable ADP-ribosylation factor GTPase-activating protein AGD15 (232 aa).

One can recognise an Arf-GAP domain in the interval 16-130 (SKILEALLKH…RWVSPGAIQP (115 aa)). The segment at 31-54 (CADCRSKAPRWASVNLGIFICMQC) adopts a C4-type zinc-finger fold. Positions 203–232 (PNQKNENFSSEVNQNRRTTIAPPSSWATFD) are disordered. Residues 206-232 (KNENFSSEVNQNRRTTIAPPSSWATFD) show a composition bias toward polar residues.

In terms of biological role, GTPase-activating protein (GAP) for ADP ribosylation factor (ARF). The polypeptide is Probable ADP-ribosylation factor GTPase-activating protein AGD15 (AGD15) (Arabidopsis thaliana (Mouse-ear cress)).